We begin with the raw amino-acid sequence, 963 residues long: MVGWGVAVLCLWVSCGAAAGQLEYSVPEETERGVAVGNLSADLRLPAAAMSSRNFRFLSSHRELYFGVDLPSGNLVVREPADREQLCRAKAACVLTYDLVLEDPLELHKIRIHVLDTNDNSPLFPAGDVQLHIPEFLTPGARFALPNAQDDDEGSNGILSYSLSPSQHFRLDMGSRVDGSEYPELVLEKALDREQRATHLLVLTARDGGLPARSGDAQVTIIVVDTNDNAPVFERSVYRTKVPETAPNGTVLFRVQALDPDEGSNGEVQYSLSNSTQAELRHRFHVHPKSGEVQVAASLGPPETLLEAYIEARDEGVFGLASTAKLLVEVTDVNDHAPELDFLTLSNPVPEDAAPGTVIALFSVKDEDLDSNGRVICGMSSAGPFQLTASFDNYYSLLIDGPLDREQISEYQVLITASDSGSPPLSTRRTITVSVADVNDNTPSFPQPQQELFIAENNGPGASLGRVFAQDPDLGKNGLVSYELLDVISEGPSASSLVAVESSSGAITAKTSFDFEQLRGFHFQVEGRDGGIPPRSATVTINLFVVDRNDNYPVILFPLPRNCSVPVEIVPRSARTGHLVTKVVAEDADSGSNAWLSYHISRASDSSLFRISANIGELRTARLVLPTDAVKQRVVVVVRDHGDPPLSSSVTLGVLLSNSVPQLLPDFEDVWEPGGQLSAQNLYLVIALACISFLFLGCLLFFVCTKLHQSPGCCAQSCCRSTEDLRYGRKMVSNPCMTSATIDVTTVERLSQTYLYRASLGLGSDNNSLLLRGEYNAADLRNLATGVGLNLPISCIQIRNRKGDHANVNAMPRQPNPDWRYSASLRAGMHSSVHLEEAGILRAGPGGPDQQWPTVSSATPEPEAGEVSPPVGAGVNSNSWTFKYGPGNPKQSGPGELPDKFIIPGSPAIISIRQEPANSQIDKSDFITFGKKEETKKKKKKKKGNKTQEKKEKGNSTTDNSDQ.

Residues 1–18 (MVGWGVAVLCLWVSCGAA) form the signal peptide. 5 Cadherin domains span residues 19-124 (AGQL…SPLF), 125-233 (PAGD…APVF), 234-340 (ERSV…APEL), 349-445 (VPED…TPSF), and 446-555 (PQPQ…YPVI). Over 19–683 (AGQLEYSVPE…GGQLSAQNLY (665 aa)) the chain is Extracellular. The N-linked (GlcNAc...) asparagine glycan is linked to Asn-38. Residues Asn-248 and Asn-274 are each glycosylated (N-linked (GlcNAc...) asparagine). A glycan (N-linked (GlcNAc...) asparagine) is linked at Asn-562. The 98-residue stretch at 570–667 (VPRSARTGHL…NSVPQLLPDF (98 aa)) folds into the Cadherin 6 domain. A helical transmembrane segment spans residues 684–704 (LVIALACISFLFLGCLLFFVC). Residues 705–963 (TKLHQSPGCC…GNSTTDNSDQ (259 aa)) are Cytoplasmic-facing. PXXP repeat units follow at residues 812 to 815 (PRQP), 845 to 848 (PGGP), 886 to 889 (PGNP), and 904 to 907 (PGSP). Residues 812–907 (PRQPNPDWRY…PDKFIIPGSP (96 aa)) are 4 X 4 AA repeats of P-X-X-P. A disordered region spans residues 844–902 (GPGGPDQQWPTVSSATPEPEAGEVSPPVGAGVNSNSWTFKYGPGNPKQSGPGELPDKFI). The interval 914–963 (QEPANSQIDKSDFITFGKKEETKKKKKKKKGNKTQEKKEKGNSTTDNSDQ) is disordered. Over residues 922-936 (DKSDFITFGKKEETK) the composition is skewed to basic and acidic residues.

It is found in the cell membrane. In terms of biological role, potential calcium-dependent cell-adhesion protein. May be involved in the establishment and maintenance of specific neuronal connections in the brain. This Pan troglodytes (Chimpanzee) protein is Protocadherin alpha-C1 (PCDHAC1).